Reading from the N-terminus, the 610-residue chain is Zinc metalloproteinase-disintegrin-like acurhagin (610 aa).

An N-terminal signal peptide occupies residues 1-20 (MIQVLLVTICLAAFPYQGSS). Positions 21 to 191 (IILESGDVND…ISQLNLIPEQ (171 aa)) are excised as a propeptide. The residue at position 192 (glutamine 192) is a Pyrrolidone carboxylic acid. One can recognise a Peptidase M12B domain in the interval 198–394 (KYVETVVVVD…HNPECIDNEP (197 aa)). Ca(2+) is bound by residues glutamate 201 and aspartate 285. 3 disulfides stabilise this stretch: cysteine 309/cysteine 389, cysteine 349/cysteine 373, and cysteine 351/cysteine 356. Histidine 334 lines the Zn(2+) pocket. Glutamate 335 is a catalytic residue. Zn(2+) is bound by residues histidine 338 and histidine 344. The N-linked (GlcNAc...) asparagine glycan is linked to asparagine 372. Positions 389, 392, 407, 409, 411, 414, and 417 each coordinate Ca(2+). In terms of domain architecture, Disintegrin spans 402–488 (PPLCGNELLE…ECPADVFHKN (87 aa)). 14 disulfides stabilise this stretch: cysteine 405–cysteine 434, cysteine 416–cysteine 429, cysteine 418–cysteine 424, cysteine 428–cysteine 451, cysteine 442–cysteine 448, cysteine 447–cysteine 473, cysteine 460–cysteine 480, cysteine 467–cysteine 499, cysteine 492–cysteine 504, cysteine 511–cysteine 561, cysteine 526–cysteine 572, cysteine 539–cysteine 549, cysteine 556–cysteine 598, and cysteine 592–cysteine 603. The short motif at 466-468 (ECD) is the D/ECD-tripeptide element. Ca(2+)-binding residues include aspartate 468, proline 469, glutamate 471, aspartate 483, and valine 484.

Belongs to the venom metalloproteinase (M12B) family. P-III subfamily. P-IIIa sub-subfamily. In terms of assembly, monomer. Requires Zn(2+) as cofactor. In terms of processing, N-glycosylated. Expressed by the venom gland.

The protein resides in the secreted. Its activity is regulated as follows. The proteinase activity is slightly enhanced by Ca(2+) and Mg(2+), but is completely inhibited by Zn(2+). Is completely inhibited by phenanthroline and EDTA. Not inhibited by PMSF. Snake venom zinc metalloprotease that causes hemorrhage and dose-dependently inhibits platelet aggregation triggered by collagen. This inhibition is due to its binding to glycoprotein VI (GP6) and collagen. The binding to GP6 results in inhibition of the signaling pathway (decrease of tyrosine phosphorylation of signaling proteins such as Syk, LAT, PI3-K and PLCgamma2). Preferentially cleaves alpha chain (FGA) of fibrinogen, followed by beta chain (FGB). Also degrades the extracellular matrix protein fibronectin (FN1), and cleaves collagen and von Willebrand factor (VWF). This chain is Zinc metalloproteinase-disintegrin-like acurhagin, found in Deinagkistrodon acutus (Hundred-pace snake).